The following is a 454-amino-acid chain: ESX-1 secretion-associated protein EspB (454 aa).

Disordered regions lie at residues 17-40 (RADE…SGLT), 82-128 (GEVE…AGES), and 391-454 (AGQG…QDNK). Gly residues predominate over residues 391–422 (AGQGGGAAGRGMAGGGMGMPMGGAGQGQGGAK).

It belongs to the EspB family. Cleaved at close to the C-terminus during secretion.

The protein resides in the secreted. The polypeptide is ESX-1 secretion-associated protein EspB (Mycobacterium marinum (strain ATCC BAA-535 / M)).